We begin with the raw amino-acid sequence, 266 residues long: Large ribosomal subunit protein uL2m (266 aa).

It belongs to the universal ribosomal protein uL2 family.

The protein resides in the mitochondrion. This chain is Large ribosomal subunit protein uL2m (mrpl2), found in Dictyostelium discoideum (Social amoeba).